The chain runs to 572 residues: Transducin-like enhancer protein 6 (572 aa).

Disordered regions lie at residues 1-30 (MTSR…SSPT), 92-121 (QSEE…SSFE), and 174-236 (KAKP…VQEP). Over residues 14–30 (KSTSPCPGISNSESSPT) the composition is skewed to polar residues. 7 WD repeats span residues 284 to 322 (AHGE…AEDR), 332 to 372 (TPGA…LHVK), 377 to 416 (CAGL…VVRD), 419 to 456 (GYPD…KPLE), 458 to 497 (QFKS…RHMV), 499 to 538 (QKDS…KVFE), and 540 to 571 (PEMS…YQIT). S510 is subject to Phosphoserine; by PKA.

The protein belongs to the WD repeat Groucho/TLE family. Homodimers. Component of the subcortical maternal complex (SCMC), at least composed of NLRP5, KHDC3, OOEP, and TLE6. Within the complex, interacts with NLRP5, KHDC3 and OOEP. The SCMC may facilitate translocation of its components between the nuclear and cytoplasmic compartments. As part of the SCMC interacts with the SCMC-associated protein ZBED3. As part of the SCMC interacts with the SCMC-associated protein NLRP4F. As part of the SCMC interacts with the SCMC-associated protein CFL1/Cofilin-1. Interacts with FOXG1/BF-1; the interaction inhibits TLE1 interaction with FOXG1/BF-1. Interacts with NFATC1. Interacts with PAX6. In terms of assembly, component of the subcortical maternal complex (SCMC), at least composed of NLRP5, KHDC3L, OOEP, and TLE6 isoform 1. Within the complex, interacts with NLRP5, KHDC3L and OOEP. The SCMC may facilitate translocation of its components between the nuclear and cytoplasmic compartments.

It localises to the cytoplasm. The protein resides in the nucleus. Functionally, component of the subcortical maternal complex (SCMC), a multiprotein complex that plays a key role in early embryonic development. The SCMC complex is a structural constituent of cytoplasmic lattices, which consist in fibrous structures found in the cytoplasm of oocytes and preimplantation embryos. They are required to store maternal proteins critical for embryonic development, such as proteins that control epigenetic reprogramming of the preimplantation embryo, and prevent their degradation or activation. Also required for spermatogenesis: regulates spermatogonia proliferation and cell cycle progression, potentially via regulation of cell cycle regulatory genes such as; CEBPB, CEBPA, CSF3, PCNA, and CDK4. Suppresses FOXG1/BF-1-mediated transcriptional repression by inhibiting interaction of the transcriptional corepressor TLE1 with FOXG1 which promotes cortical neuron differentiation. Acts as a transcriptional corepressor of NFATC1-mediated gene expression by contributing to PAX6-mediated repression. In terms of biological role, component of the subcortical maternal complex (SCMC), a multiprotein complex that plays a key role in early embryonic development. The sequence is that of Transducin-like enhancer protein 6 from Homo sapiens (Human).